Consider the following 243-residue polypeptide: Thaumatin-like protein 1 (243 aa).

An N-terminal signal peptide occupies residues 1-22; it reads MMKTLALYGLTLALFFLSGAHS. Cystine bridges form between cysteine 31–cysteine 242, cysteine 79–cysteine 88, cysteine 93–cysteine 100, cysteine 148–cysteine 231, cysteine 153–cysteine 214, cysteine 161–cysteine 177, cysteine 181–cysteine 190, and cysteine 191–cysteine 201.

Belongs to the thaumatin family.

It localises to the secreted. The protein localises to the extracellular space. The protein resides in the apoplast. Its function is as follows. Possesses antifungal activity. The sequence is that of Thaumatin-like protein 1 (TL1) from Castanea sativa (Sweet chestnut).